The sequence spans 141 residues: Hemoglobin subunit alpha (141 aa).

The Globin domain occupies 1–141 (VLSPADKTNV…VSTVLTSKYR (141 aa)). S3 is modified (phosphoserine). K7 is subject to N6-succinyllysine. Phosphothreonine is present on T8. At K11 the chain carries N6-succinyllysine. K16 carries the N6-acetyllysine; alternate modification. Position 16 is an N6-succinyllysine; alternate (K16). Y24 bears the Phosphotyrosine mark. Residue S35 is modified to Phosphoserine. K40 carries the post-translational modification N6-succinyllysine. S49 bears the Phosphoserine mark. H58 lines the O2 pocket. Position 87 (H87) interacts with heme b. S102 is subject to Phosphoserine. Residue T108 is modified to Phosphothreonine. S124 is subject to Phosphoserine. Phosphothreonine is present on residues T134 and T137. S138 is modified (phosphoserine).

The protein belongs to the globin family. In terms of assembly, heterotetramer of two alpha chains and two beta chains. In terms of tissue distribution, red blood cells.

In terms of biological role, involved in oxygen transport from the lung to the various peripheral tissues. Its function is as follows. Hemopressin acts as an antagonist peptide of the cannabinoid receptor CNR1. Hemopressin-binding efficiently blocks cannabinoid receptor CNR1 and subsequent signaling. This Pteronura brasiliensis (Giant otter) protein is Hemoglobin subunit alpha (HBA).